The sequence spans 144 residues: Large ribosomal subunit protein uL13 (144 aa).

This sequence belongs to the universal ribosomal protein uL13 family. As to quaternary structure, part of the 50S ribosomal subunit.

In terms of biological role, this protein is one of the early assembly proteins of the 50S ribosomal subunit, although it is not seen to bind rRNA by itself. It is important during the early stages of 50S assembly. This Clostridium acetobutylicum (strain ATCC 824 / DSM 792 / JCM 1419 / IAM 19013 / LMG 5710 / NBRC 13948 / NRRL B-527 / VKM B-1787 / 2291 / W) protein is Large ribosomal subunit protein uL13.